Reading from the N-terminus, the 316-residue chain is 4-hydroxy-3-methylbut-2-enyl diphosphate reductase (316 aa).

C12 contacts [4Fe-4S] cluster. Residues H41 and H74 each contribute to the (2E)-4-hydroxy-3-methylbut-2-enyl diphosphate site. Residues H41 and H74 each coordinate dimethylallyl diphosphate. 2 residues coordinate isopentenyl diphosphate: H41 and H74. C96 lines the [4Fe-4S] cluster pocket. Residue H124 coordinates (2E)-4-hydroxy-3-methylbut-2-enyl diphosphate. H124 contributes to the dimethylallyl diphosphate binding site. H124 is an isopentenyl diphosphate binding site. The active-site Proton donor is E126. T168 serves as a coordination point for (2E)-4-hydroxy-3-methylbut-2-enyl diphosphate. C198 is a binding site for [4Fe-4S] cluster. S226, S227, N228, and S270 together coordinate (2E)-4-hydroxy-3-methylbut-2-enyl diphosphate. Residues S226, S227, N228, and S270 each coordinate dimethylallyl diphosphate. Residues S226, S227, N228, and S270 each contribute to the isopentenyl diphosphate site.

The protein belongs to the IspH family. Requires [4Fe-4S] cluster as cofactor.

The enzyme catalyses isopentenyl diphosphate + 2 oxidized [2Fe-2S]-[ferredoxin] + H2O = (2E)-4-hydroxy-3-methylbut-2-enyl diphosphate + 2 reduced [2Fe-2S]-[ferredoxin] + 2 H(+). The catalysed reaction is dimethylallyl diphosphate + 2 oxidized [2Fe-2S]-[ferredoxin] + H2O = (2E)-4-hydroxy-3-methylbut-2-enyl diphosphate + 2 reduced [2Fe-2S]-[ferredoxin] + 2 H(+). It participates in isoprenoid biosynthesis; dimethylallyl diphosphate biosynthesis; dimethylallyl diphosphate from (2E)-4-hydroxy-3-methylbutenyl diphosphate: step 1/1. It functions in the pathway isoprenoid biosynthesis; isopentenyl diphosphate biosynthesis via DXP pathway; isopentenyl diphosphate from 1-deoxy-D-xylulose 5-phosphate: step 6/6. Functionally, catalyzes the conversion of 1-hydroxy-2-methyl-2-(E)-butenyl 4-diphosphate (HMBPP) into a mixture of isopentenyl diphosphate (IPP) and dimethylallyl diphosphate (DMAPP). Acts in the terminal step of the DOXP/MEP pathway for isoprenoid precursor biosynthesis. The chain is 4-hydroxy-3-methylbut-2-enyl diphosphate reductase from Acinetobacter baylyi (strain ATCC 33305 / BD413 / ADP1).